Here is a 306-residue protein sequence, read N- to C-terminus: MEIILANPRGFCAGVERAIAIVERALEKFGAPIYVRHEVVHNKFVCDDLRAKGAVFVEELDEVPAGSTVIFSAHGVSKAVREDAEARGLKVFDATCPLVTKVHVEVGKMRNQTREVVMIGHKGHPEVEGTMGQSQGGMYLVETADEVAQLQVSDPLHLSFVTQTTLSVDDATVVIDALKQRFPEIQGPKKDDICYATQNRQDAVKELAGKCDLVLVVGSPNSSNSRRLKEVAVGRNVMAFLIDDAEEIEESWLRGKQHIGVTAGASAPETLVERVVMHIQALTGASVTHLKGIEEGISFPLPKDLN.

Cys-12 provides a ligand contact to [4Fe-4S] cluster. (2E)-4-hydroxy-3-methylbut-2-enyl diphosphate contacts are provided by His-41 and His-74. Residues His-41 and His-74 each contribute to the dimethylallyl diphosphate site. The isopentenyl diphosphate site is built by His-41 and His-74. Cys-96 contributes to the [4Fe-4S] cluster binding site. A (2E)-4-hydroxy-3-methylbut-2-enyl diphosphate-binding site is contributed by His-124. His-124 is a binding site for dimethylallyl diphosphate. His-124 lines the isopentenyl diphosphate pocket. The active-site Proton donor is the Glu-126. Thr-164 provides a ligand contact to (2E)-4-hydroxy-3-methylbut-2-enyl diphosphate. Cys-194 serves as a coordination point for [4Fe-4S] cluster. Ser-222, Ser-223, Asn-224, and Ser-266 together coordinate (2E)-4-hydroxy-3-methylbut-2-enyl diphosphate. Residues Ser-222, Ser-223, Asn-224, and Ser-266 each contribute to the dimethylallyl diphosphate site. Residues Ser-222, Ser-223, Asn-224, and Ser-266 each contribute to the isopentenyl diphosphate site.

It belongs to the IspH family. The cofactor is [4Fe-4S] cluster.

It catalyses the reaction isopentenyl diphosphate + 2 oxidized [2Fe-2S]-[ferredoxin] + H2O = (2E)-4-hydroxy-3-methylbut-2-enyl diphosphate + 2 reduced [2Fe-2S]-[ferredoxin] + 2 H(+). The catalysed reaction is dimethylallyl diphosphate + 2 oxidized [2Fe-2S]-[ferredoxin] + H2O = (2E)-4-hydroxy-3-methylbut-2-enyl diphosphate + 2 reduced [2Fe-2S]-[ferredoxin] + 2 H(+). The protein operates within isoprenoid biosynthesis; dimethylallyl diphosphate biosynthesis; dimethylallyl diphosphate from (2E)-4-hydroxy-3-methylbutenyl diphosphate: step 1/1. Its pathway is isoprenoid biosynthesis; isopentenyl diphosphate biosynthesis via DXP pathway; isopentenyl diphosphate from 1-deoxy-D-xylulose 5-phosphate: step 6/6. Functionally, catalyzes the conversion of 1-hydroxy-2-methyl-2-(E)-butenyl 4-diphosphate (HMBPP) into a mixture of isopentenyl diphosphate (IPP) and dimethylallyl diphosphate (DMAPP). Acts in the terminal step of the DOXP/MEP pathway for isoprenoid precursor biosynthesis. The polypeptide is 4-hydroxy-3-methylbut-2-enyl diphosphate reductase (Dechloromonas aromatica (strain RCB)).